A 161-amino-acid chain; its full sequence is Transcription antitermination protein NusB (161 aa).

A disordered region spans residues 1–22 (MNLSDFKPGEGTEVPEEEKSVS).

The protein belongs to the NusB family.

Involved in transcription antitermination. Required for transcription of ribosomal RNA (rRNA) genes. Binds specifically to the boxA antiterminator sequence of the ribosomal RNA (rrn) operons. This Hydrogenovibrio crunogenus (strain DSM 25203 / XCL-2) (Thiomicrospira crunogena) protein is Transcription antitermination protein NusB.